The primary structure comprises 1024 residues: Protein sumv-1 (1024 aa).

Disordered regions lie at residues aspartate 447–proline 486, asparagine 501–valine 564, proline 577–alanine 617, serine 645–glutamine 664, valine 710–glutamine 739, and alanine 773–leucine 1024. 3 stretches are compositionally biased toward polar residues: residues serine 467–proline 486, asparagine 501–threonine 514, and arginine 528–aspartate 542. The span at serine 584–proline 600 shows a compositional bias: low complexity. Residues glutamine 605–alanine 617 show a composition bias toward polar residues. Low complexity-rich tracts occupy residues valine 710–serine 730 and alanine 784–serine 809. The segment covering valine 810 to proline 832 has biased composition (polar residues). The span at threonine 859 to threonine 870 shows a compositional bias: low complexity. The span at histidine 873–threonine 883 shows a compositional bias: polar residues. Positions proline 903–lysine 914 are enriched in basic and acidic residues. Composition is skewed to low complexity over residues proline 916–isoleucine 943, serine 952–threonine 962, and leucine 970–alanine 986. The span at isoleucine 987–lysine 998 shows a compositional bias: polar residues.

Its subcellular location is the nucleus. It localises to the cytoplasm. The protein localises to the cell projection. The protein resides in the axon. In terms of biological role, nuclear factor that influences the activity of genes involved in vulval development. This is Protein sumv-1 from Caenorhabditis elegans.